A 437-amino-acid chain; its full sequence is ATP-dependent RNA helicase RhlB (437 aa).

The Q motif signature appears at 9-37; sequence KKFADFPLHKEVQQALNEVGFEFCTPIQA. The Helicase ATP-binding domain occupies 40–219; the sequence is LPILLAKKDI…YDHMNEPEKV (180 aa). Position 53 to 60 (53 to 60) interacts with ATP; that stretch reads AQTGTGKT. A DEAD box motif is present at residues 165-168; the sequence is DEAD. Positions 243–390 constitute a Helicase C-terminal domain; sequence KMPLLLSLLE…VTSYDSEALL (148 aa). A disordered region spans residues 394–437; that stretch reads PAPKRIHRKPSSHSRNSRDRSGSRPQGGHRGNAPRRHDKTRRHS. The segment covering 425-437 has biased composition (basic residues); the sequence is NAPRRHDKTRRHS.

The protein belongs to the DEAD box helicase family. RhlB subfamily. As to quaternary structure, component of the RNA degradosome, which is a multiprotein complex involved in RNA processing and mRNA degradation.

It localises to the cytoplasm. It catalyses the reaction ATP + H2O = ADP + phosphate + H(+). Its function is as follows. DEAD-box RNA helicase involved in RNA degradation. Has RNA-dependent ATPase activity and unwinds double-stranded RNA. In Shewanella piezotolerans (strain WP3 / JCM 13877), this protein is ATP-dependent RNA helicase RhlB.